The sequence spans 4965 residues: Auxin transport protein BIG (4965 aa).

The next 3 helical transmembrane spans lie at serine 289 to proline 309, alanine 646 to valine 666, and leucine 772 to leucine 792. Residues threonine 1383 to glutamate 1425 are disordered. The segment covering serine 1397–serine 1407 has biased composition (acidic residues). The UBR-type zinc finger occupies lysine 1431 to proline 1502. The tract at residues aspartate 2437–asparagine 2456 is disordered. Low complexity predominate over residues lysine 2445–asparagine 2456. The ZZ-type zinc finger occupies serine 2469–aspartate 2528. The Zn(2+) site is built by cysteine 2474, cysteine 2477, cysteine 2489, cysteine 2492, cysteine 2498, cysteine 2501, histidine 2514, and histidine 2518. Positions asparagine 2997–cysteine 3037 are disordered. Over residues glycine 3007–serine 3017 the composition is skewed to low complexity. Residues lysine 3024–cysteine 3037 are compositionally biased toward basic and acidic residues. An MYND-type; degenerate zinc finger spans residues cysteine 3319–cysteine 3359. The interval proline 3672–serine 3721 is disordered. The span at histidine 3699–leucine 3713 shows a compositional bias: polar residues. The UBR4 E3 catalytic module stretch occupies residues proline 4433–alanine 4963. The segment at glycine 4562–alanine 4681 adopts a HemiRING-type zinc-finger fold. Zn(2+) contacts are provided by cysteine 4565, cysteine 4568, histidine 4615, and cysteine 4618. Residues serine 4684–alanine 4963 form the UZI domain. Residues serine 4753 to glycine 4770 are compositionally biased toward low complexity. Disordered regions lie at residues serine 4753–serine 4778 and serine 4822–asparagine 4846. Polar residues predominate over residues leucine 4824 to serine 4845.

This sequence belongs to the UBR4 family.

The protein resides in the membrane. Its function is as follows. Required for auxin efflux and polar auxin transport (PAT) influencing auxin-mediated developmental responses (e.g. cell elongation, apical dominance, lateral root production, inflorescence architecture, general growth and development). In Oryza sativa subsp. japonica (Rice), this protein is Auxin transport protein BIG.